A 946-amino-acid chain; its full sequence is Bifunctional glutamine synthetase adenylyltransferase/adenylyl-removing enzyme (946 aa).

The interval methionine 1 to glutamate 440 is adenylyl removase. The adenylyl transferase stretch occupies residues serine 449 to glutamate 946.

Belongs to the GlnE family. It depends on Mg(2+) as a cofactor.

It catalyses the reaction [glutamine synthetase]-O(4)-(5'-adenylyl)-L-tyrosine + phosphate = [glutamine synthetase]-L-tyrosine + ADP. The enzyme catalyses [glutamine synthetase]-L-tyrosine + ATP = [glutamine synthetase]-O(4)-(5'-adenylyl)-L-tyrosine + diphosphate. Its function is as follows. Involved in the regulation of glutamine synthetase GlnA, a key enzyme in the process to assimilate ammonia. When cellular nitrogen levels are high, the C-terminal adenylyl transferase (AT) inactivates GlnA by covalent transfer of an adenylyl group from ATP to specific tyrosine residue of GlnA, thus reducing its activity. Conversely, when nitrogen levels are low, the N-terminal adenylyl removase (AR) activates GlnA by removing the adenylyl group by phosphorolysis, increasing its activity. The regulatory region of GlnE binds the signal transduction protein PII (GlnB) which indicates the nitrogen status of the cell. This Shigella sonnei (strain Ss046) protein is Bifunctional glutamine synthetase adenylyltransferase/adenylyl-removing enzyme.